The sequence spans 402 residues: Flavohemoprotein (402 aa).

Residues methionine 1–alanine 136 form the Globin domain. Heme b is bound at residue histidine 85. Active-site charge relay system residues include tyrosine 95 and glutamate 135. The segment at glycine 147–glutamine 402 is reductase. In terms of domain architecture, FAD-binding FR-type spans lysine 150–asparagine 260. Residues tyrosine 188 and arginine 204–serine 207 contribute to the FAD site. Glycine 273–proline 278 contacts NADP(+). Phenylalanine 394–proline 397 is a binding site for FAD.

The protein belongs to the globin family. Two-domain flavohemoproteins subfamily. In the C-terminal section; belongs to the flavoprotein pyridine nucleotide cytochrome reductase family. Heme b serves as cofactor. Requires FAD as cofactor.

It carries out the reaction 2 nitric oxide + NADPH + 2 O2 = 2 nitrate + NADP(+) + H(+). The catalysed reaction is 2 nitric oxide + NADH + 2 O2 = 2 nitrate + NAD(+) + H(+). In terms of biological role, is involved in NO detoxification in an aerobic process, termed nitric oxide dioxygenase (NOD) reaction that utilizes O(2) and NAD(P)H to convert NO to nitrate, which protects the bacterium from various noxious nitrogen compounds. Therefore, plays a central role in the inducible response to nitrosative stress. This is Flavohemoprotein from Bacillus anthracis.